A 222-amino-acid chain; its full sequence is Acyl-protein thioesterase 1 homolog 2 (222 aa).

Catalysis depends on charge relay system residues serine 116, aspartate 169, and histidine 202.

The protein belongs to the AB hydrolase superfamily. AB hydrolase 2 family.

The protein localises to the cytoplasm. It localises to the nucleus. The enzyme catalyses S-hexadecanoyl-L-cysteinyl-[protein] + H2O = L-cysteinyl-[protein] + hexadecanoate + H(+). Functionally, hydrolyzes fatty acids from S-acylated cysteine residues in proteins with a strong preference for palmitoylated G-alpha proteins over other acyl substrates. Mediates the deacylation of G-alpha proteins such as GPA1 in vivo, but has weak or no activity toward palmitoylated Ras proteins. Has weak lysophospholipase activity in vitro; however such activity may not exist in vivo. The sequence is that of Acyl-protein thioesterase 1 homolog 2 from Dictyostelium discoideum (Social amoeba).